The sequence spans 224 residues: DNA repair and recombination protein RadB (224 aa).

This sequence belongs to the eukaryotic RecA-like protein family. RadB subfamily.

Its function is as follows. Involved in DNA repair and in homologous recombination. May regulate the cleavage reactions of the branch-structured DNA. Has a very weak ATPase activity that is not stimulated by DNA. Binds DNA but does not promote DNA strands exchange. This is DNA repair and recombination protein RadB from Thermococcus onnurineus (strain NA1).